The following is a 366-amino-acid chain: Alanine racemase (366 aa).

Lysine 33 functions as the Proton acceptor; specific for D-alanine in the catalytic mechanism. N6-(pyridoxal phosphate)lysine is present on lysine 33. Residue arginine 129 participates in substrate binding. Tyrosine 253 acts as the Proton acceptor; specific for L-alanine in catalysis. Residue methionine 301 participates in substrate binding.

It belongs to the alanine racemase family. Requires pyridoxal 5'-phosphate as cofactor.

The enzyme catalyses L-alanine = D-alanine. It functions in the pathway amino-acid biosynthesis; D-alanine biosynthesis; D-alanine from L-alanine: step 1/1. Its function is as follows. Catalyzes the interconversion of L-alanine and D-alanine. May also act on other amino acids. The sequence is that of Alanine racemase (alr) from Xanthomonas oryzae pv. oryzae (strain KACC10331 / KXO85).